Reading from the N-terminus, the 319-residue chain is Fructokinase (319 aa).

This sequence belongs to the carbohydrate kinase PfkB family. In terms of tissue distribution, expressed in swelling stolons and, at higher levels, in developing tubers. Low levels found in leaves and stems from tuberizing plants.

It carries out the reaction D-fructose + ATP = D-fructose 6-phosphate + ADP + H(+). The protein operates within glycan biosynthesis; starch biosynthesis. In terms of biological role, may play an important role in maintaining the flux of carbon towards starch formation. The protein is Fructokinase of Solanum tuberosum (Potato).